Consider the following 418-residue polypeptide: Aspartate aminotransferase 1 (418 aa).

An N6-(pyridoxal phosphate)lysine modification is found at lysine 264.

This sequence belongs to the class-I pyridoxal-phosphate-dependent aminotransferase family. Homodimer. The cofactor is pyridoxal 5'-phosphate. Nodules, roots, stems and leaves, in decreasing order of aspartate aminotransferase 1 concentration. Is the predominant aspartate aminotransferase isoenzyme in roots.

Its subcellular location is the cytoplasm. The enzyme catalyses L-aspartate + 2-oxoglutarate = oxaloacetate + L-glutamate. Important for the metabolism of amino acids and Krebs-cycle related organic acids. In plants, it is involved in nitrogen metabolism and in aspects of carbon and energy metabolism. The chain is Aspartate aminotransferase 1 (AAT-1) from Medicago sativa (Alfalfa).